The primary structure comprises 273 residues: Large ribosomal subunit protein uL2 (273 aa).

Disordered stretches follow at residues 28–53 and 221–273; these read KPFA…TTRH and RGTA…RRSK. Over residues 39 to 48 the composition is skewed to low complexity; the sequence is KSGGRNNNGR. An N6-acetyllysine modification is found at K242.

It belongs to the universal ribosomal protein uL2 family. In terms of assembly, part of the 50S ribosomal subunit. Forms a bridge to the 30S subunit in the 70S ribosome.

In terms of biological role, one of the primary rRNA binding proteins. Required for association of the 30S and 50S subunits to form the 70S ribosome, for tRNA binding and peptide bond formation. It has been suggested to have peptidyltransferase activity; this is somewhat controversial. Makes several contacts with the 16S rRNA in the 70S ribosome. This is Large ribosomal subunit protein uL2 from Shigella dysenteriae serotype 1 (strain Sd197).